The chain runs to 166 residues: Thiol peroxidase (166 aa).

The region spanning 18-164 is the Thioredoxin domain; the sequence is VKVGDKAPNF…YEKAIEAAKA (147 aa). Cys-60 acts as the Cysteine sulfenic acid (-SOH) intermediate in catalysis. Cys-60 and Cys-94 are joined by a disulfide.

It belongs to the peroxiredoxin family. Tpx subfamily. As to quaternary structure, homodimer.

The catalysed reaction is a hydroperoxide + [thioredoxin]-dithiol = an alcohol + [thioredoxin]-disulfide + H2O. Functionally, thiol-specific peroxidase that catalyzes the reduction of hydrogen peroxide and organic hydroperoxides to water and alcohols, respectively. Plays a role in cell protection against oxidative stress by detoxifying peroxides. This is Thiol peroxidase from Halalkalibacterium halodurans (strain ATCC BAA-125 / DSM 18197 / FERM 7344 / JCM 9153 / C-125) (Bacillus halodurans).